A 218-amino-acid polypeptide reads, in one-letter code: N-(5'-phosphoribosyl)anthranilate isomerase (218 aa).

Belongs to the TrpF family.

The enzyme catalyses N-(5-phospho-beta-D-ribosyl)anthranilate = 1-(2-carboxyphenylamino)-1-deoxy-D-ribulose 5-phosphate. Its pathway is amino-acid biosynthesis; L-tryptophan biosynthesis; L-tryptophan from chorismate: step 3/5. This chain is N-(5'-phosphoribosyl)anthranilate isomerase, found in Rhodopseudomonas palustris (strain BisB18).